An 813-amino-acid chain; its full sequence is Ribosome-releasing factor 2, mitochondrial (813 aa).

The N-terminal 20 residues, 1–20 (MLRIVWKPLKIRLPVWRRYQ), are a transit peptide targeting the mitochondrion. In terms of domain architecture, tr-type G spans 26–314 (NSIRNVGIIA…AIIDYLPSPV (289 aa)). GTP contacts are provided by residues 35-42 (AHIDAGKT), 99-103 (DTPGH), and 153-156 (NKMD).

It belongs to the TRAFAC class translation factor GTPase superfamily. Classic translation factor GTPase family. EF-G/EF-2 subfamily.

The protein resides in the mitochondrion. Mitochondrial GTPase that mediates the disassembly of ribosomes from messenger RNA at the termination of mitochondrial protein biosynthesis. Not involved in the GTP-dependent ribosomal translocation step during translation elongation. In Schizosaccharomyces pombe (strain 972 / ATCC 24843) (Fission yeast), this protein is Ribosome-releasing factor 2, mitochondrial (mef2).